A 259-amino-acid chain; its full sequence is 1,2-dihydroxy-1,2-dihydronaphthalene dehydrogenase (259 aa).

8–32 is a binding site for NAD(+); sequence SITGAGSGIGLELVRSFKSAGYYVS. S140 is a binding site for substrate. Y153 (proton acceptor) is an active-site residue.

The protein belongs to the short-chain dehydrogenases/reductases (SDR) family.

It catalyses the reaction (1R,2S)-1,2-dihydronaphthalene-1,2-diol + NAD(+) = naphthalene-1,2-diol + NADH + H(+). The enzyme catalyses cis-1,2-dihydroxy-1,2-dihydrodibenzothiophene + NAD(+) = 1,2-dihydroxydibenzothiophene + NADH + H(+). Its pathway is aromatic compound metabolism; naphthalene degradation. In terms of biological role, catalyzes the oxidation of naphthalene dihydrodiol into 1,2-dihydroxynaphthalene. In Pseudomonas putida (Arthrobacter siderocapsulatus), this protein is 1,2-dihydroxy-1,2-dihydronaphthalene dehydrogenase (nahB).